An 89-amino-acid chain; its full sequence is Putative membrane protein insertion efficiency factor (89 aa).

It belongs to the UPF0161 family.

It localises to the cell membrane. Functionally, could be involved in insertion of integral membrane proteins into the membrane. The sequence is that of Putative membrane protein insertion efficiency factor from Exiguobacterium sp. (strain ATCC BAA-1283 / AT1b).